Reading from the N-terminus, the 633-residue chain is tRNA uridine 5-carboxymethylaminomethyl modification enzyme MnmG (633 aa).

FAD is bound by residues 15–20, Val127, and Ser182; that span reads GAGHAG. NAD(+) is bound at residue 276–290; sequence GPRYCPSIEDKIVRF. Gln373 lines the FAD pocket.

The protein belongs to the MnmG family. As to quaternary structure, homodimer. Heterotetramer of two MnmE and two MnmG subunits. The cofactor is FAD.

Its subcellular location is the cytoplasm. In terms of biological role, NAD-binding protein involved in the addition of a carboxymethylaminomethyl (cmnm) group at the wobble position (U34) of certain tRNAs, forming tRNA-cmnm(5)s(2)U34. The sequence is that of tRNA uridine 5-carboxymethylaminomethyl modification enzyme MnmG from Streptococcus thermophilus (strain CNRZ 1066).